The sequence spans 333 residues: Glycerol-3-phosphate dehydrogenase [NAD(P)+] (333 aa).

Residues Ser-10, Trp-11, and Lys-105 each contribute to the NADPH site. Sn-glycerol 3-phosphate is bound by residues Lys-105, Gly-136, and Thr-138. Ala-140 is an NADPH binding site. 5 residues coordinate sn-glycerol 3-phosphate: Lys-191, Asp-244, Ser-254, Arg-255, and Asn-256. The active-site Proton acceptor is the Lys-191. Arg-255 lines the NADPH pocket. Residues Val-279 and Glu-281 each contribute to the NADPH site.

This sequence belongs to the NAD-dependent glycerol-3-phosphate dehydrogenase family.

It localises to the cytoplasm. The enzyme catalyses sn-glycerol 3-phosphate + NAD(+) = dihydroxyacetone phosphate + NADH + H(+). The catalysed reaction is sn-glycerol 3-phosphate + NADP(+) = dihydroxyacetone phosphate + NADPH + H(+). The protein operates within membrane lipid metabolism; glycerophospholipid metabolism. Functionally, catalyzes the reduction of the glycolytic intermediate dihydroxyacetone phosphate (DHAP) to sn-glycerol 3-phosphate (G3P), the key precursor for phospholipid synthesis. The chain is Glycerol-3-phosphate dehydrogenase [NAD(P)+] from Trichlorobacter lovleyi (strain ATCC BAA-1151 / DSM 17278 / SZ) (Geobacter lovleyi).